Reading from the N-terminus, the 151-residue chain is Transcriptional regulator MraZ (151 aa).

2 SpoVT-AbrB domains span residues E7–E53 and I82–L125.

The protein belongs to the MraZ family. As to quaternary structure, forms oligomers.

It localises to the cytoplasm. The protein resides in the nucleoid. In Cytophaga hutchinsonii (strain ATCC 33406 / DSM 1761 / CIP 103989 / NBRC 15051 / NCIMB 9469 / D465), this protein is Transcriptional regulator MraZ.